The chain runs to 275 residues: Hydroxyethylthiazole kinase (275 aa).

A substrate-binding site is contributed by Met57. ATP contacts are provided by Arg132 and Ser178. Gly205 serves as a coordination point for substrate.

The protein belongs to the Thz kinase family. Mg(2+) is required as a cofactor.

It carries out the reaction 5-(2-hydroxyethyl)-4-methylthiazole + ATP = 4-methyl-5-(2-phosphooxyethyl)-thiazole + ADP + H(+). Its pathway is cofactor biosynthesis; thiamine diphosphate biosynthesis; 4-methyl-5-(2-phosphoethyl)-thiazole from 5-(2-hydroxyethyl)-4-methylthiazole: step 1/1. Functionally, catalyzes the phosphorylation of the hydroxyl group of 4-methyl-5-beta-hydroxyethylthiazole (THZ). This chain is Hydroxyethylthiazole kinase, found in Clavibacter sepedonicus (Clavibacter michiganensis subsp. sepedonicus).